A 696-amino-acid chain; its full sequence is Translation initiation factor IF-2 (696 aa).

One can recognise a tr-type G domain in the interval 187-361 (ERPPVVTVMG…EMQEIKGIPD (175 aa)). Residues 196-203 (GHVDHGKT) form a G1 region. 196 to 203 (GHVDHGKT) lines the GTP pocket. Residues 221-225 (GITQS) are G2. A G3 region spans residues 242 to 245 (DTPG). GTP-binding positions include 242 to 246 (DTPGH) and 296 to 299 (NKID). A G4 region spans residues 296–299 (NKID). The G5 stretch occupies residues 333 to 335 (SAK).

The protein belongs to the TRAFAC class translation factor GTPase superfamily. Classic translation factor GTPase family. IF-2 subfamily.

The protein localises to the cytoplasm. In terms of biological role, one of the essential components for the initiation of protein synthesis. Protects formylmethionyl-tRNA from spontaneous hydrolysis and promotes its binding to the 30S ribosomal subunits. Also involved in the hydrolysis of GTP during the formation of the 70S ribosomal complex. This chain is Translation initiation factor IF-2, found in Thermosipho africanus (strain TCF52B).